We begin with the raw amino-acid sequence, 255 residues long: NAD-dependent protein deacylase (255 aa).

Positions 1-253 constitute a Deacetylase sirtuin-type domain; it reads MEFSDELLAS…PLLLQALRRS (253 aa). 22-42 contacts NAD(+); that stretch reads GAGVSAESGIPTFRDALTGFW. Residues Tyr67 and Arg70 each contribute to the substrate site. 101-104 provides a ligand contact to NAD(+); that stretch reads QNVD. The active-site Proton acceptor is His119. Residues Cys127, Cys130, Cys155, and Cys158 each contribute to the Zn(2+) site. NAD(+)-binding positions include 195-197, 221-223, and Ala239; these read GTS and NPA.

This sequence belongs to the sirtuin family. Class III subfamily. Requires Zn(2+) as cofactor.

The protein resides in the cytoplasm. It catalyses the reaction N(6)-acetyl-L-lysyl-[protein] + NAD(+) + H2O = 2''-O-acetyl-ADP-D-ribose + nicotinamide + L-lysyl-[protein]. The catalysed reaction is N(6)-succinyl-L-lysyl-[protein] + NAD(+) + H2O = 2''-O-succinyl-ADP-D-ribose + nicotinamide + L-lysyl-[protein]. Its function is as follows. NAD-dependent lysine deacetylase and desuccinylase that specifically removes acetyl and succinyl groups on target proteins. Modulates the activities of several proteins which are inactive in their acylated form. The protein is NAD-dependent protein deacylase of Methylococcus capsulatus (strain ATCC 33009 / NCIMB 11132 / Bath).